The chain runs to 177 residues: NADH-quinone oxidoreductase subunit B (177 aa).

[4Fe-4S] cluster contacts are provided by C53, C54, C118, and C148.

It belongs to the complex I 20 kDa subunit family. In terms of assembly, NDH-1 is composed of 14 different subunits. Subunits NuoB, C, D, E, F, and G constitute the peripheral sector of the complex. [4Fe-4S] cluster serves as cofactor.

Its subcellular location is the cell membrane. It carries out the reaction a quinone + NADH + 5 H(+)(in) = a quinol + NAD(+) + 4 H(+)(out). NDH-1 shuttles electrons from NADH, via FMN and iron-sulfur (Fe-S) centers, to quinones in the respiratory chain. The immediate electron acceptor for the enzyme in this species is believed to be a menaquinone. Couples the redox reaction to proton translocation (for every two electrons transferred, four hydrogen ions are translocated across the cytoplasmic membrane), and thus conserves the redox energy in a proton gradient. The chain is NADH-quinone oxidoreductase subunit B from Anoxybacillus flavithermus (strain DSM 21510 / WK1).